Reading from the N-terminus, the 1037-residue chain is uncharacterized protein (1037 aa).

This is an uncharacterized protein from Saccharomyces cerevisiae (strain ATCC 204508 / S288c) (Baker's yeast).